A 136-amino-acid polypeptide reads, in one-letter code: Cytokine-like protein 1 (136 aa).

An N-terminal signal peptide occupies residues 1 to 22 (MRTPGPLPVLLLLLAGAPAARP).

In terms of tissue distribution, specifically expressed in CD34+ hematopoietic cells.

Its subcellular location is the secreted. This is Cytokine-like protein 1 (CYTL1) from Homo sapiens (Human).